The following is a 471-amino-acid chain: Citrate synthase, mitochondrial (471 aa).

Residues H309, H355, and D409 contribute to the active site.

Belongs to the citrate synthase family. As to quaternary structure, homodimer. In terms of tissue distribution, ubiquitous.

Its subcellular location is the mitochondrion matrix. The enzyme catalyses oxaloacetate + acetyl-CoA + H2O = citrate + CoA + H(+). The protein operates within carbohydrate metabolism; tricarboxylic acid cycle; isocitrate from oxaloacetate: step 1/2. This is Citrate synthase, mitochondrial from Solanum tuberosum (Potato).